We begin with the raw amino-acid sequence, 292 residues long: Elongation factor Ts (292 aa).

Positions 80–83 are involved in Mg(2+) ion dislocation from EF-Tu; that stretch reads TDFV.

The protein belongs to the EF-Ts family.

Its subcellular location is the cytoplasm. Its function is as follows. Associates with the EF-Tu.GDP complex and induces the exchange of GDP to GTP. It remains bound to the aminoacyl-tRNA.EF-Tu.GTP complex up to the GTP hydrolysis stage on the ribosome. This Cupriavidus metallidurans (strain ATCC 43123 / DSM 2839 / NBRC 102507 / CH34) (Ralstonia metallidurans) protein is Elongation factor Ts.